Reading from the N-terminus, the 299-residue chain is Sulfate adenylyltransferase subunit 2 (299 aa).

Belongs to the PAPS reductase family. CysD subfamily. Sulfate-activating enzymes, NodP and NodQ, may be physically associated.

It catalyses the reaction sulfate + ATP + H(+) = adenosine 5'-phosphosulfate + diphosphate. Its function is as follows. Proposed to provide activated sulfate for transfer to nod factor. In Rhizobium tropici, this protein is Sulfate adenylyltransferase subunit 2 (nodP).